We begin with the raw amino-acid sequence, 663 residues long: Zeaxanthin epoxidase, chloroplastic (663 aa).

The N-terminal 50 residues, 1 to 50, are a transit peptide targeting the chloroplast; sequence MYSTVFYTSVHPSTSAFSRKQLPLLISKDFPTELYHSLPCSRSLENGQIK. FAD is bound by residues 81-109 and 359-372; these read KVLV…LVFE and TFSW…LLGD. In terms of domain architecture, FHA spans 547-611; it reads LVLSRDENMP…HGTWITDNEG (65 aa).

It depends on FAD as a cofactor. As to expression, higher expression in leaves than in roots.

The protein resides in the plastid. It is found in the chloroplast membrane. It localises to the chloroplast thylakoid membrane. It carries out the reaction all-trans-zeaxanthin + 4 reduced [2Fe-2S]-[ferredoxin] + 2 O2 + 4 H(+) = all-trans-violaxanthin + 4 oxidized [2Fe-2S]-[ferredoxin] + 2 H2O. It functions in the pathway plant hormone biosynthesis; abscisate biosynthesis. In terms of biological role, converts zeaxanthin into antheraxanthin and subsequently violaxanthin. Involved in the epoxidation of zeaxanthin. Plays an important role in resistance to stresses, seed development and dormancy. The polypeptide is Zeaxanthin epoxidase, chloroplastic (ABA2) (Nicotiana plumbaginifolia (Leadwort-leaved tobacco)).